Consider the following 130-residue polypeptide: Small ribosomal subunit protein uS9 (130 aa).

Belongs to the universal ribosomal protein uS9 family.

The polypeptide is Small ribosomal subunit protein uS9 (Streptococcus suis (strain 98HAH33)).